The primary structure comprises 295 residues: Phosphoenolpyruvate phosphomutase (295 aa).

Residue aspartate 58 is the Nucleophile of the active site. Aspartate 58 is a binding site for Mg(2+).

The protein belongs to the isocitrate lyase/PEP mutase superfamily. PEP mutase family. As to quaternary structure, homotetramer. Mg(2+) is required as a cofactor.

It carries out the reaction phosphoenolpyruvate + H(+) = 3-phosphonopyruvate. The protein operates within phosphorus metabolism; phosphonate biosynthesis. Formation of a carbon-phosphorus bond by converting phosphoenolpyruvate (PEP) to phosphonopyruvate (P-Pyr). The sequence is that of Phosphoenolpyruvate phosphomutase from Mytilus edulis (Blue mussel).